The sequence spans 1371 residues: DNA-directed RNA polymerase subunit beta (1371 aa).

This sequence belongs to the RNA polymerase beta chain family. As to quaternary structure, the RNAP catalytic core consists of 2 alpha, 1 beta, 1 beta' and 1 omega subunit. When a sigma factor is associated with the core the holoenzyme is formed, which can initiate transcription.

The enzyme catalyses RNA(n) + a ribonucleoside 5'-triphosphate = RNA(n+1) + diphosphate. In terms of biological role, DNA-dependent RNA polymerase catalyzes the transcription of DNA into RNA using the four ribonucleoside triphosphates as substrates. The polypeptide is DNA-directed RNA polymerase subunit beta (Geobacter sp. (strain M21)).